We begin with the raw amino-acid sequence, 405 residues long: Acetylornithine/succinyldiaminopimelate aminotransferase (405 aa).

Residues 107-108 and F140 contribute to the pyridoxal 5'-phosphate site; that span reads GA. R143 contacts N(2)-acetyl-L-ornithine. 225-228 contributes to the pyridoxal 5'-phosphate binding site; it reads DEVQ. K254 carries the post-translational modification N6-(pyridoxal phosphate)lysine. T282 is a binding site for N(2)-acetyl-L-ornithine. Residue T283 coordinates pyridoxal 5'-phosphate.

It belongs to the class-III pyridoxal-phosphate-dependent aminotransferase family. ArgD subfamily. Homodimer. Pyridoxal 5'-phosphate serves as cofactor.

Its subcellular location is the cytoplasm. The catalysed reaction is N(2)-acetyl-L-ornithine + 2-oxoglutarate = N-acetyl-L-glutamate 5-semialdehyde + L-glutamate. It catalyses the reaction N-succinyl-(2S,6S)-2,6-diaminopimelate + 2-oxoglutarate = (S)-2-succinylamino-6-oxoheptanedioate + L-glutamate. Its pathway is amino-acid biosynthesis; L-arginine biosynthesis; N(2)-acetyl-L-ornithine from L-glutamate: step 4/4. It functions in the pathway amino-acid biosynthesis; L-lysine biosynthesis via DAP pathway; LL-2,6-diaminopimelate from (S)-tetrahydrodipicolinate (succinylase route): step 2/3. Functionally, involved in both the arginine and lysine biosynthetic pathways. The protein is Acetylornithine/succinyldiaminopimelate aminotransferase of Yersinia pestis.